We begin with the raw amino-acid sequence, 767 residues long: uncharacterized protein (767 aa).

3 disordered regions span residues 171–209, 314–340, and 533–566; these read LPVW…LRTP, ETEA…CQEE, and RDHG…PRGF. Composition is skewed to basic and acidic residues over residues 322–331 and 552–564; these read PDPRPEKDAK and ETKD…RDPR.

This is an uncharacterized protein from Homo sapiens (Human).